Consider the following 408-residue polypeptide: MFDFMVYSPEVNAFLMSRGPGSTPLWGAAEAWISLAEQLMEAAQEVSDTIVVAVPASFAGETSDMLASRVSTFVAWLDGNAENAGLIARVLHAVAYAFEEARAGMVPLLTVLGNIIHTMALKAINWFGQVSTTVAALEADYDLMWVQNSTAMTTYRDTVLRETGKMENFEPAPQLVSRYCMDRRDSVNSFHSSSSSDSLYESIDNLYDSVAQSEEHGSDSMSQSYNTCGSVAQSELCDSPFGTPSQSSQSNDLSATSLTQQLGGLDSIISSASASLLTTNSISSSTASSIMPIVASQVTETLGRSQVAVEKMIQSISSTAVSVDVAASKVVAGVGQAVSVGALRVPENWATASQPVMATAHSVPAGCSAITTAVSGPLEGVTQPAEEVLTASVAGGSGTGGPAFNEAV.

2 repeat units span residues 209–214 and 230–235. The interval 209–235 is 2 X 6 AA repeats of S-V-A-Q-S-E; sequence SVAQSEEHGSDSMSQSYNTCGSVAQSE.

It belongs to the mycobacterial PPE family.

In Mycobacterium leprae (strain TN), this protein is Serine-rich antigen (sra).